We begin with the raw amino-acid sequence, 275 residues long: Adaptin ear-binding coat-associated protein 1 (275 aa).

Residues 166–190 (ITTKKGGTSKPKTAGTGGLSLLPPP) form a disordered region. A compositionally biased stretch (low complexity) spans 167 to 179 (TTKKGGTSKPKTA). A Phosphothreonine modification is found at T211. Residues 215–275 (IPKSNHGGSD…APQPSNWVQF (61 aa)) are disordered. Short sequence motifs (WXXF motif) lie at residues 252 to 255 (WGDF) and 272 to 275 (WVQF). Residues 256–275 (STASSSVPNQAPQPSNWVQF) show a composition bias toward polar residues.

It belongs to the NECAP family. In terms of assembly, interacts with AP1G1 and AP2A1 components of the adapter protein complexes AP-1 and AP-2. Interacts with the GAE domain proteins GGA1, GGA2 and GGA3.

Its subcellular location is the cytoplasmic vesicle. It localises to the clathrin-coated vesicle membrane. The protein localises to the cell membrane. Functionally, involved in endocytosis. This is Adaptin ear-binding coat-associated protein 1 (NECAP1) from Bos taurus (Bovine).